The primary structure comprises 626 residues: DNA mismatch repair protein MutL (626 aa).

The protein belongs to the DNA mismatch repair MutL/HexB family.

Functionally, this protein is involved in the repair of mismatches in DNA. It is required for dam-dependent methyl-directed DNA mismatch repair. May act as a 'molecular matchmaker', a protein that promotes the formation of a stable complex between two or more DNA-binding proteins in an ATP-dependent manner without itself being part of a final effector complex. The polypeptide is DNA mismatch repair protein MutL (Cellvibrio japonicus (strain Ueda107) (Pseudomonas fluorescens subsp. cellulosa)).